A 357-amino-acid chain; its full sequence is Membrane-bound lytic murein transglycosylase C (357 aa).

The first 15 residues, 1 to 15, serve as a signal peptide directing secretion; sequence MKKYLLLALLPFLYA. Cys16 carries the N-palmitoyl cysteine lipid modification. A lipid anchor (S-diacylglycerol cysteine) is attached at Cys16.

This sequence belongs to the transglycosylase Slt family.

It is found in the cell outer membrane. It catalyses the reaction Exolytic cleavage of the (1-&gt;4)-beta-glycosidic linkage between N-acetylmuramic acid (MurNAc) and N-acetylglucosamine (GlcNAc) residues in peptidoglycan, from either the reducing or the non-reducing ends of the peptidoglycan chains, with concomitant formation of a 1,6-anhydrobond in the MurNAc residue.. Its function is as follows. Murein-degrading enzyme. May play a role in recycling of muropeptides during cell elongation and/or cell division. This chain is Membrane-bound lytic murein transglycosylase C, found in Haemophilus influenzae (strain 86-028NP).